Consider the following 1116-residue polypeptide: Rho GTPase-activating protein 45 (1116 aa).

The interval 1 to 72 (MFSRKKRELM…RPTSLSRHAS (72 aa)) is disordered. A compositionally biased stretch (polar residues) spans 22-31 (GSPNPQSSSG). Residues Ser23, Ser72, Ser92, and Ser98 each carry the phosphoserine modification. Residues 268–538 (EEVDMLLQRC…SSKLYDPGQQ (271 aa)) form the F-BAR domain. Positions 375 to 498 (EHERRRKEIK…QIQEVIRQSD (124 aa)) form a coiled coil. Residues 422–457 (VAKAEEEQQGTGPGAGTAASKALDKRRRLEEEAKNK) form a disordered region. Over residues 448 to 457 (RRLEEEAKNK) the composition is skewed to basic and acidic residues. 4 positions are modified to phosphoserine: Ser568, Ser577, Ser591, and Ser618. Residues 569–658 (PIMRTRKGSF…MSSSEELGDQ (90 aa)) are disordered. A compositionally biased stretch (polar residues) spans 621–635 (ISISDTEVGLDTSSG). Residues 643–652 (TSSSGTMSSS) show a composition bias toward low complexity. A Phorbol-ester/DAG-type zinc finger spans residues 699 to 744 (THRLRKLRTPAKCRECNSYVYFQGAECEECCLACHKKCLETLAIQC). Positions 758–971 (QDFSQAALST…TLIVHYGLVF (214 aa)) constitute a Rho-GAP domain. Residues Ser946, Ser1017, Ser1020, and Ser1022 each carry the phosphoserine modification. Disordered regions lie at residues 1004 to 1035 (EEAEDGSRESHAASNDSDSELEDASDPLSSSD) and 1050 to 1116 (AGLE…PQFV). Composition is skewed to polar residues over residues 1080-1090 (FNTNQSNNTSR) and 1105-1116 (GGTSQERQPQFV).

Its subcellular location is the cytoplasm. The protein resides in the cell projection. It localises to the ruffle membrane. Its function is as follows. Contains a GTPase activator for the Rho-type GTPases (RhoGAP) domain that would be able to negatively regulate the actin cytoskeleton as well as cell spreading. However, also contains N-terminally a BAR-domin which is able to play an autoinhibitory effect on this RhoGAP activity. The polypeptide is Rho GTPase-activating protein 45 (Mus musculus (Mouse)).